A 355-amino-acid polypeptide reads, in one-letter code: Guanine nucleotide-binding protein G(q) subunit alpha (355 aa).

Cys-3 carries S-palmitoyl cysteine lipidation. The G-alpha domain occupies 32–355; it reads KEIKLLLLGT…QHITEVVPGL (324 aa). Residues 35 to 48 form a G1 motif region; the sequence is KLLLLGTGESGKST. GTP is bound by residues 40-47, 174-180, 199-203, 269-272, and Ala-326; these read GTGESGKS, LRVRVPT, DVGGQ, and NKKD. Residues Ser-47 and Thr-180 each contribute to the Mg(2+) site. The segment at 172-180 is G2 motif; it reads DVLRVRVPT. Positions 195 to 204 are G3 motif; sequence FKMVDVGGQR. The tract at residues 265-272 is G4 motif; the sequence is ILFLNKKD. The segment at 324–329 is G5 motif; the sequence is TCATDT.

The protein belongs to the G-alpha family. G(q) subfamily. In terms of assembly, g proteins are composed of 3 units; alpha, beta and gamma. The alpha chain contains the guanine nucleotide binding site.

Guanine nucleotide-binding proteins (G proteins) are involved as modulators or transducers in various transmembrane signaling systems. This is Guanine nucleotide-binding protein G(q) subunit alpha from Geodia cydonium (Sponge).